The following is a 485-amino-acid chain: WD repeat-containing protein 13 (485 aa).

Phosphoserine occurs at positions 70, 74, and 79. Arg114 is subject to Asymmetric dimethylarginine; alternate. Omega-N-methylarginine; alternate is present on Arg114. WD repeat units follow at residues 170-210, 215-254, 302-341, 406-446, and 451-484; these read HVDE…PTVL, GHTRGVSDFAWSLSNDILVSTSLDATMRIWASEDGRCIRE, KLTGRVLALSFDAPGRLLWAGDDRGSVFSFLFDMATGKLT, HPVR…KAAV, and GHSAPVLDVSFNCDESLLASSDASGMVIVWRREQ.

Its subcellular location is the nucleus. This chain is WD repeat-containing protein 13 (WDR13), found in Pongo abelii (Sumatran orangutan).